The following is an 84-amino-acid chain: Putative membrane protein insertion efficiency factor (84 aa).

It belongs to the UPF0161 family.

The protein resides in the cell inner membrane. Could be involved in insertion of integral membrane proteins into the membrane. This Shewanella frigidimarina (strain NCIMB 400) protein is Putative membrane protein insertion efficiency factor.